We begin with the raw amino-acid sequence, 294 residues long: 4-hydroxy-tetrahydrodipicolinate synthase (294 aa).

Threonine 47 contacts pyruvate. The Proton donor/acceptor role is filled by tyrosine 135. The Schiff-base intermediate with substrate role is filled by lysine 163. Threonine 205 lines the pyruvate pocket.

Belongs to the DapA family. Homotetramer; dimer of dimers.

It is found in the cytoplasm. The enzyme catalyses L-aspartate 4-semialdehyde + pyruvate = (2S,4S)-4-hydroxy-2,3,4,5-tetrahydrodipicolinate + H2O + H(+). It participates in amino-acid biosynthesis; L-lysine biosynthesis via DAP pathway; (S)-tetrahydrodipicolinate from L-aspartate: step 3/4. Functionally, catalyzes the condensation of (S)-aspartate-beta-semialdehyde [(S)-ASA] and pyruvate to 4-hydroxy-tetrahydrodipicolinate (HTPA). In Rickettsia conorii (strain ATCC VR-613 / Malish 7), this protein is 4-hydroxy-tetrahydrodipicolinate synthase.